The primary structure comprises 176 residues: Small ribosomal subunit protein uS5 (176 aa).

Positions 11 to 74 (LSEVLVDVNR…QAAKKRMMKV (64 aa)) constitute an S5 DRBM domain.

It belongs to the universal ribosomal protein uS5 family. Part of the 30S ribosomal subunit. Contacts proteins S4 and S8.

Its function is as follows. With S4 and S12 plays an important role in translational accuracy. In terms of biological role, located at the back of the 30S subunit body where it stabilizes the conformation of the head with respect to the body. The chain is Small ribosomal subunit protein uS5 from Rickettsia massiliae (strain Mtu5).